Consider the following 276-residue polypeptide: METLELQGAKLRYHQVGQGPVLIFIPGANGTGNIFLPLAEQLKDHFTVVAVDRRDYGESELTEPLPDSASNPDSDYRVKRDAQDIAELAKSLSDEPVYILGSSSGSIVAMHVLKDYPEVVKKIAFHEPPINTFLPDSTYWKDKNDDIVHQILTEGLEKGMKTFGETLNIAPIDAKMMSQPADTEEGRIEQYKRTMFWSEFEIRQYTHSDITLDDFTKYSDKITLLNGTDSRGSFPQDVNFYINKETGIPIVDIPGGHLGYIQKPEGFADVLLNMWG.

Residues 20-137 enclose the AB hydrolase-1 domain; that stretch reads PVLIFIPGAN…PPINTFLPDS (118 aa). The segment at 57 to 76 is disordered; that stretch reads GESELTEPLPDSASNPDSDY.

Belongs to the AB hydrolase superfamily.

This is an uncharacterized protein from Staphylococcus aureus (strain N315).